Consider the following 207-residue polypeptide: MWGIKGSFAVLLLLFLAYIFASSVNADSLSAPLNVTIKALEGNSAIVTWDILEGDPVIGFAITQQKKDVRMLRFIQEVNTTTRSCALWDLEEDTEYIVHVQSISMSGTSPPSEPVLFRTPKESEKLASKSPDEVTMEEVGQAAQLRAGELIIIVVVLVMWAGVIALFCRQYDIIKDNEPNNNKDKAKNSSECSTPEHPTGGLLRSKV.

The signal sequence occupies residues 1–26 (MWGIKGSFAVLLLLFLAYIFASSVNA). The Extracellular portion of the chain corresponds to 27-146 (DSLSAPLNVT…EEVGQAAQLR (120 aa)). In terms of domain architecture, Fibronectin type-III spans 31-122 (APLNVTIKAL…EPVLFRTPKE (92 aa)). 2 N-linked (GlcNAc...) asparagine glycosylation sites follow: Asn-34 and Asn-79. A helical transmembrane segment spans residues 147 to 167 (AGELIIIVVVLVMWAGVIALF). The Cytoplasmic segment spans residues 168 to 207 (CRQYDIIKDNEPNNNKDKAKNSSECSTPEHPTGGLLRSKV). The segment covering 178–188 (EPNNNKDKAKN) has biased composition (basic and acidic residues). The segment at 178 to 207 (EPNNNKDKAKNSSECSTPEHPTGGLLRSKV) is disordered. A Microbody targeting signal motif is present at residues 205–207 (SKV).

As to quaternary structure, dimer; may exist in other oligomeric forms. Post-translationally, the extracellular domain is cleaved and released from the cell membrane.

It localises to the cell membrane. The protein resides in the peroxisome membrane. It is found in the secreted. Functionally, may mediate beneficial effects of muscular exercise. The chain is Fibronectin type III domain-containing protein 5b (fndc5b) from Danio rerio (Zebrafish).